Consider the following 180-residue polypeptide: Large ribosomal subunit protein uL6 (180 aa).

It belongs to the universal ribosomal protein uL6 family. As to quaternary structure, part of the 50S ribosomal subunit.

Functionally, this protein binds to the 23S rRNA, and is important in its secondary structure. It is located near the subunit interface in the base of the L7/L12 stalk, and near the tRNA binding site of the peptidyltransferase center. The sequence is that of Large ribosomal subunit protein uL6 from Thermoanaerobacter sp. (strain X514).